Consider the following 842-residue polypeptide: MSEEDRNVFTSIDKKGGGSKQMDDLNQKCPKRKTSKLKGIPKLEDANDAGTKNSQQCTLILTEGDSAKTLAVSGLSVVGRDKYGVFPFRRKLLNVCDLNVNQIADSAEVNAIIKILGLQYTKKYETEDDFKTLRYGKLLIMANHDSDGSQFKGLLLNFFHRFWPALFKRDFVEDFITPIAKATEGKEEVSFYSLPEYSEWRMNTDNWKSYTIKYYNGLGTLTSKEAKKCFSDMVRHRIRFKYNGADDDKAVNMAFSKKKIEARTDYLMKLMQDKNQRKQQGLAEECLYNKETRFVTLKDFFNYEIVCSWNLHSIPCLVDGLKPGQRKVLFACFKRANKREVKVAQLAGAVAEISAYHHGEQSLMGTIVNLAQDYVGSHNINLLLPIGQFGTRLQGGKDSASARSIFAQLSQVTRTLFPAHDDNVLRFLYEENQRIEPEWYCPIIPMVLVNGAQGTGTGWSTNIPNYNPRELVKNIKRLIAGEPQKALAPWYKNFRGKIIQIDPSRFACYGEVSVLDDNTIEITELPIKQWTQDYKEKVLEGLMESSDKKSPVIVDYKEYHTDTTVKFVVKLSPGKLRELERGQDLHQVFKLQAVINTTCMVLFDAAGWLRTYTSPEAITQEFYDSRQEKYVQRKEYLLGVLQAQSKRLTNQARFILATINNKIVLENKKKTAIVDVLIKMKFDADPVKKWKEDQKLKELRESGEIELDEDDLAAVAVEEGEDISSAAKAVETKLSDYDYLVGLALIKLSEEEKNKLIKESEEKMAEVRVLEKKTWQDLWITDLDNFMSELTSRRLARKLSLRRTATRWYAMICQRRVTWSSMKESISIRTMTVWSVRMSSRS.

Residues methionine 1–asparagine 26 are compositionally biased toward basic and acidic residues. The interval methionine 1–glycine 50 is disordered. The Topo IIA-type catalytic domain occupies isoleucine 314–leucine 783.

The protein belongs to the type II topoisomerase family.

In terms of biological role, plays a role in the removal of cohesin from kinetochores on mitotic chromosomes and is required for centromere resolution. The polypeptide is DNA topoisomerase-like protein cin-4 (Caenorhabditis elegans).